A 430-amino-acid polypeptide reads, in one-letter code: Adenylosuccinate synthetase (430 aa).

GTP contacts are provided by residues G12–K18 and G40–T42. The Proton acceptor role is filled by D13. Residues D13 and G40 each contribute to the Mg(2+) site. IMP is bound by residues D13–K16, N38–H41, T128, R142, Q223, T238, and R302. The Proton donor role is filled by H41. V298–R304 is a substrate binding site. GTP-binding positions include R304, K330 to D332, and G412 to G414.

Belongs to the adenylosuccinate synthetase family. In terms of assembly, homodimer. Mg(2+) is required as a cofactor.

It is found in the cytoplasm. The enzyme catalyses IMP + L-aspartate + GTP = N(6)-(1,2-dicarboxyethyl)-AMP + GDP + phosphate + 2 H(+). It participates in purine metabolism; AMP biosynthesis via de novo pathway; AMP from IMP: step 1/2. In terms of biological role, plays an important role in the de novo pathway of purine nucleotide biosynthesis. Catalyzes the first committed step in the biosynthesis of AMP from IMP. The polypeptide is Adenylosuccinate synthetase (Corynebacterium ammoniagenes (Brevibacterium ammoniagenes)).